Reading from the N-terminus, the 407-residue chain is MVHIQADGARSTAVILVAAGRGERAGASSEGPKQYRRIGGKPVIVHSLLGFADLLPQATLIVVIHPDDGALLANALAPYPQLAASLTITHGGKTRQQSVLAGLRALRNQKPDYVLIHDAVRPFFDQLMLQRIIARLDDGADAVLPAIPVTDTLKRGDEGARVVDTVARSGLFAAQTPQSFHFAKILAAHEDAASAGREDFTDDAAIAEWAGLTVHLVEGSPDNVKLTVKRDLEMADARLSHNALPDVRTGNGYDVHQLVPGDGVTLCGIFIAHDQALSGHSDADVALHALTDALLATCGAGDIGDHFPPSDPQWRGAASRIFLEHAANIVRDAGGTIMNADISLIAEAPKIGPHRQIMREKLSEILGIALERCSVKATTNEKIGFVGRGEGIAAIATATVVFQGKPQ.

Positions 1-247 are 2-C-methyl-D-erythritol 4-phosphate cytidylyltransferase; that stretch reads MVHIQADGAR…RLSHNALPDV (247 aa). The 2-C-methyl-D-erythritol 2,4-cyclodiphosphate synthase stretch occupies residues 248-407; that stretch reads RTGNGYDVHQ…ATVVFQGKPQ (160 aa). Asp-254 and His-256 together coordinate a divalent metal cation. 4-CDP-2-C-methyl-D-erythritol 2-phosphate contacts are provided by residues 254–256 and 280–281; these read DVH and HS. An a divalent metal cation-binding site is contributed by His-288. 4-CDP-2-C-methyl-D-erythritol 2-phosphate is bound by residues 302 to 304, 378 to 381, Phe-385, and Arg-388; these read DIG and TTNE.

In the N-terminal section; belongs to the IspD/TarI cytidylyltransferase family. IspD subfamily. This sequence in the C-terminal section; belongs to the IspF family. A divalent metal cation is required as a cofactor.

The catalysed reaction is 2-C-methyl-D-erythritol 4-phosphate + CTP + H(+) = 4-CDP-2-C-methyl-D-erythritol + diphosphate. It catalyses the reaction 4-CDP-2-C-methyl-D-erythritol 2-phosphate = 2-C-methyl-D-erythritol 2,4-cyclic diphosphate + CMP. It functions in the pathway isoprenoid biosynthesis; isopentenyl diphosphate biosynthesis via DXP pathway; isopentenyl diphosphate from 1-deoxy-D-xylulose 5-phosphate: step 2/6. The protein operates within isoprenoid biosynthesis; isopentenyl diphosphate biosynthesis via DXP pathway; isopentenyl diphosphate from 1-deoxy-D-xylulose 5-phosphate: step 4/6. In terms of biological role, bifunctional enzyme that catalyzes the formation of 4-diphosphocytidyl-2-C-methyl-D-erythritol from CTP and 2-C-methyl-D-erythritol 4-phosphate (MEP) (IspD), and catalyzes the conversion of 4-diphosphocytidyl-2-C-methyl-D-erythritol 2-phosphate (CDP-ME2P) to 2-C-methyl-D-erythritol 2,4-cyclodiphosphate (ME-CPP) with a corresponding release of cytidine 5-monophosphate (CMP) (IspF). The polypeptide is Bifunctional enzyme IspD/IspF (Allorhizobium ampelinum (strain ATCC BAA-846 / DSM 112012 / S4) (Agrobacterium vitis (strain S4))).